The sequence spans 232 residues: 7-cyano-7-deazaguanine synthase (232 aa).

8 to 18 provides a ligand contact to ATP; the sequence is FSGGQDSTTCL. Positions 188, 197, 200, and 203 each coordinate Zn(2+).

It belongs to the QueC family. It depends on Zn(2+) as a cofactor.

It carries out the reaction 7-carboxy-7-deazaguanine + NH4(+) + ATP = 7-cyano-7-deazaguanine + ADP + phosphate + H2O + H(+). It participates in purine metabolism; 7-cyano-7-deazaguanine biosynthesis. Its function is as follows. Catalyzes the ATP-dependent conversion of 7-carboxy-7-deazaguanine (CDG) to 7-cyano-7-deazaguanine (preQ(0)). This is 7-cyano-7-deazaguanine synthase from Buchnera aphidicola subsp. Schizaphis graminum (strain Sg).